The sequence spans 272 residues: Orotidine 5'-phosphate decarboxylase (272 aa).

The Proton donor role is filled by Lys-93.

The protein belongs to the OMP decarboxylase family. Type 2 subfamily.

The enzyme catalyses orotidine 5'-phosphate + H(+) = UMP + CO2. Its pathway is pyrimidine metabolism; UMP biosynthesis via de novo pathway; UMP from orotate: step 2/2. This is Orotidine 5'-phosphate decarboxylase from Roseiflexus castenholzii (strain DSM 13941 / HLO8).